Reading from the N-terminus, the 369-residue chain is tRNA-specific 2-thiouridylase MnmA (369 aa).

ATP is bound by residues 10–17 and Leu-36; that span reads GLSGGVDS. Cys-97 functions as the Nucleophile in the catalytic mechanism. Cys-97 and Cys-196 are disulfide-bonded. Gly-122 is an ATP binding site. Positions 146–148 are interaction with tRNA; that stretch reads KDQ. Cys-196 functions as the Cysteine persulfide intermediate in the catalytic mechanism. An interaction with tRNA region spans residues 301 to 302; that stretch reads RY.

Belongs to the MnmA/TRMU family.

Its subcellular location is the cytoplasm. The enzyme catalyses S-sulfanyl-L-cysteinyl-[protein] + uridine(34) in tRNA + AH2 + ATP = 2-thiouridine(34) in tRNA + L-cysteinyl-[protein] + A + AMP + diphosphate + H(+). In terms of biological role, catalyzes the 2-thiolation of uridine at the wobble position (U34) of tRNA, leading to the formation of s(2)U34. This is tRNA-specific 2-thiouridylase MnmA from Thermosynechococcus vestitus (strain NIES-2133 / IAM M-273 / BP-1).